The primary structure comprises 267 residues: 3-deoxy-manno-octulosonate cytidylyltransferase (267 aa).

This sequence belongs to the KdsB family.

The protein resides in the cytoplasm. The catalysed reaction is 3-deoxy-alpha-D-manno-oct-2-ulosonate + CTP = CMP-3-deoxy-beta-D-manno-octulosonate + diphosphate. It participates in nucleotide-sugar biosynthesis; CMP-3-deoxy-D-manno-octulosonate biosynthesis; CMP-3-deoxy-D-manno-octulosonate from 3-deoxy-D-manno-octulosonate and CTP: step 1/1. It functions in the pathway bacterial outer membrane biogenesis; lipopolysaccharide biosynthesis. Activates KDO (a required 8-carbon sugar) for incorporation into bacterial lipopolysaccharide in Gram-negative bacteria. The sequence is that of 3-deoxy-manno-octulosonate cytidylyltransferase from Paraburkholderia phymatum (strain DSM 17167 / CIP 108236 / LMG 21445 / STM815) (Burkholderia phymatum).